We begin with the raw amino-acid sequence, 300 residues long: NAD kinase (300 aa).

The active-site Proton acceptor is the Asp75. Residues Asp75 to Gly76, Asn149 to Asp150, Arg177, Asp179, Thr190 to Ser195, Ala214, and Gln248 each bind NAD(+).

Belongs to the NAD kinase family. It depends on a divalent metal cation as a cofactor.

Its subcellular location is the cytoplasm. The enzyme catalyses NAD(+) + ATP = ADP + NADP(+) + H(+). In terms of biological role, involved in the regulation of the intracellular balance of NAD and NADP, and is a key enzyme in the biosynthesis of NADP. Catalyzes specifically the phosphorylation on 2'-hydroxyl of the adenosine moiety of NAD to yield NADP. This is NAD kinase from Paraburkholderia phytofirmans (strain DSM 17436 / LMG 22146 / PsJN) (Burkholderia phytofirmans).